We begin with the raw amino-acid sequence, 91 residues long: Elongation factor 1-beta (91 aa).

This sequence belongs to the EF-1-beta/EF-1-delta family.

Promotes the exchange of GDP for GTP in EF-1-alpha/GDP, thus allowing the regeneration of EF-1-alpha/GTP that could then be used to form the ternary complex EF-1-alpha/GTP/AAtRNA. This Pyrococcus furiosus (strain ATCC 43587 / DSM 3638 / JCM 8422 / Vc1) protein is Elongation factor 1-beta.